A 185-amino-acid polypeptide reads, in one-letter code: A-type ATP synthase subunit E (185 aa).

This sequence belongs to the V-ATPase E subunit family. As to quaternary structure, has multiple subunits with at least A(3), B(3), C, D, E, F, H, I and proteolipid K(x).

It localises to the cell membrane. Functionally, component of the A-type ATP synthase that produces ATP from ADP in the presence of a proton gradient across the membrane. The protein is A-type ATP synthase subunit E of Thermoplasma acidophilum (strain ATCC 25905 / DSM 1728 / JCM 9062 / NBRC 15155 / AMRC-C165).